The chain runs to 262 residues: Endoplasmic reticulum chaperone BiP (262 aa).

8 to 11 contacts ATP; that stretch reads GSTR. The tract at residues 53–63 is interdomain linker; it reads QDTGDLVLLDV. Residues 64–144 form a substrate-binding (SBD) region; the sequence is CPLTLGIETV…PRGVPQIEVT (81 aa). Position 91 is an N6-succinyllysine (lysine 91). Arginine 136 bears the Omega-N-methylarginine mark. Residue threonine 162 is modified to O-AMP-threonine; alternate. Threonine 162 carries the post-translational modification Phosphothreonine; alternate. At lysine 229 the chain carries N6,N6,N6-trimethyllysine; by METTL21A; in vitro. N6,N6-dimethyllysine; alternate is present on lysine 229. Lysine 229 carries the post-translational modification N6-methyllysine; alternate. Lysine 235 is subject to N6-methyllysine.

This sequence belongs to the heat shock protein 70 family. Monomer and homooligomer; homooligomerization via the interdomain linker inactivates the chaperone activity and acts as a storage of HSPA5/BiP molecules. Interacts with DNAJC1 (via J domain). Component of an EIF2 complex at least composed of CELF1/CUGBP1, CALR, CALR3, EIF2S1, EIF2S2, HSP90B1 and HSPA5. Part of a large chaperone multiprotein complex comprising DNAJB11, HSP90B1, HSPA5, HYOU, PDIA2, PDIA4, PDIA6, PPIB, SDF2L1, UGGT1 and very small amounts of ERP29, but not, or at very low levels, CALR nor CANX. Interacts with TMEM132A and TRIM21. May form a complex with ERLEC1, OS9, SEL1L and SYVN1. Interacts with DNAJC10. Interacts with DNAJB9/ERdj4; leading to recruit HSPA5/BiP to ERN1/IRE1. Interacts with ERN1/IRE1 (via luminal domain); the interaction takes place following interaction with DNAJB9/ERdj4 and leads to inactivate ERN1/IRE1, the interaction also competitively inhibits ERN1 interaction with MANF. Interacts directly with MANF (via SAP domain); the interaction inhibits ATP binding to HSPA5/BiP and subsequent nucleotide exchange. Interacts with EIF2AK3/PERK (via luminal domain); interaction leads to inactivate EIF2AK3/PERK. Interacts with MX1. Interacts with METTL23. Interacts with CEMIP; the interaction induces calcium leakage from the endoplasmic reticulum and cell migration. Interacts with PCSK4 form; the interaction takes place in the endoplasmic reticulum. Interacts with CIPC. Interacts with CCDC88B (via C-terminus); the interaction opposes ERN1-mediated JNK activation, protecting against apoptosis. Interacts with INPP5K; necessary for INPP5K localization at the endoplasmic reticulum. Interacts with MANF; the interaction is direct. Interacts with LOXL2; leading to activate the ERN1/IRE1-XBP1 pathway of the unfolded protein response. Interacts with CLU under stressed condition; interaction increases CLU protein stability; facilitates its retrotranslocation and redistribution to the mitochondria; cooperatively suppress stress-induced apoptosis by stabilizing mitochondrial membrane integrity. Interacts with CCDC47. Interacts with CLN3. Interacts with ELAPOR1; may regulate the function of HSPA5 in apoptosis and cell proliferation. Interacts with CASP7. Interacts with ILDR2; the interaction stabilizes ILDR2 expression. Interacts with ADAM7. In unstressed cells, AMPylation at Thr-162 by FICD inactivates the chaperome activity: AMPylated form is locked in a relatively inert state and only weakly stimulated by J domain-containing proteins. In response to endoplasmic reticulum stress, de-AMPylation by the same protein, FICD, restores the chaperone activity.

The protein resides in the endoplasmic reticulum lumen. The protein localises to the melanosome. Its subcellular location is the cytoplasm. It is found in the cell surface. The enzyme catalyses ATP + H2O = ADP + phosphate + H(+). The chaperone activity is regulated by ATP-induced allosteric coupling of the nucleotide-binding (NBD) and substrate-binding (SBD) domains. In the ADP-bound and nucleotide-free (apo) states, the two domains have little interaction. In contrast, in the ATP-bound state the two domains are tightly coupled, which results in drastically accelerated kinetics in both binding and release of polypeptide substrates. J domain-containing co-chaperones (DNAJB9/ERdj4 or DNAJC10/ERdj5) stimulate the ATPase activity and are required for efficient substrate recognition by HSPA5/BiP. Homooligomerization inactivates participating HSPA5/BiP protomers and probably act as reservoirs to store HSPA5/BiP molecules when they are not needed by the cell. Its function is as follows. Endoplasmic reticulum chaperone that plays a key role in protein folding and quality control in the endoplasmic reticulum lumen. Involved in the correct folding of proteins and degradation of misfolded proteins via its interaction with DNAJC10/ERdj5, probably to facilitate the release of DNAJC10/ERdj5 from its substrate. Acts as a key repressor of the EIF2AK3/PERK and ERN1/IRE1-mediated unfolded protein response (UPR). In the unstressed endoplasmic reticulum, recruited by DNAJB9/ERdj4 to the luminal region of ERN1/IRE1, leading to disrupt the dimerization of ERN1/IRE1, thereby inactivating ERN1/IRE1. Also binds and inactivates EIF2AK3/PERK in unstressed cells. Accumulation of misfolded protein in the endoplasmic reticulum causes release of HSPA5/BiP from ERN1/IRE1 and EIF2AK3/PERK, allowing their homodimerization and subsequent activation. Plays an auxiliary role in post-translational transport of small presecretory proteins across endoplasmic reticulum (ER). May function as an allosteric modulator for SEC61 channel-forming translocon complex, likely cooperating with SEC62 to enable the productive insertion of these precursors into SEC61 channel. Appears to specifically regulate translocation of precursors having inhibitory residues in their mature region that weaken channel gating. May also play a role in apoptosis and cell proliferation. This is Endoplasmic reticulum chaperone BiP from Sus scrofa (Pig).